A 147-amino-acid polypeptide reads, in one-letter code: Hemoglobin subunit beta-A/B (147 aa).

One can recognise a Globin domain in the interval 2–147; it reads EWTDAERSAI…VVNALKRQYH (146 aa). 2 residues coordinate heme b: His63 and His92.

Belongs to the globin family. As to quaternary structure, heterotetramer of two alpha chains and two beta chains. In terms of tissue distribution, red blood cells.

Its function is as follows. Involved in oxygen transport from gills to the various peripheral tissues. The polypeptide is Hemoglobin subunit beta-A/B (Cyprinus carpio (Common carp)).